Consider the following 442-residue polypeptide: tRNA-2-methylthio-N(6)-dimethylallyladenosine synthase (442 aa).

Residues K3–V120 form the MTTase N-terminal domain. Residues C12, C49, C83, C157, C161, and C164 each coordinate [4Fe-4S] cluster. The 233-residue stretch at R143–E375 folds into the Radical SAM core domain. The TRAM domain maps to R378–Q442.

This sequence belongs to the methylthiotransferase family. MiaB subfamily. As to quaternary structure, monomer. The cofactor is [4Fe-4S] cluster.

The protein localises to the cytoplasm. It catalyses the reaction N(6)-dimethylallyladenosine(37) in tRNA + (sulfur carrier)-SH + AH2 + 2 S-adenosyl-L-methionine = 2-methylsulfanyl-N(6)-dimethylallyladenosine(37) in tRNA + (sulfur carrier)-H + 5'-deoxyadenosine + L-methionine + A + S-adenosyl-L-homocysteine + 2 H(+). In terms of biological role, catalyzes the methylthiolation of N6-(dimethylallyl)adenosine (i(6)A), leading to the formation of 2-methylthio-N6-(dimethylallyl)adenosine (ms(2)i(6)A) at position 37 in tRNAs that read codons beginning with uridine. The chain is tRNA-2-methylthio-N(6)-dimethylallyladenosine synthase from Pseudomonas syringae pv. syringae (strain B728a).